We begin with the raw amino-acid sequence, 767 residues long: Cation/H(+) antiporter 27 (767 aa).

The next 11 membrane-spanning stretches (helical) occupy residues 39 to 59 (LPLL…FQFL), 63 to 83 (FGKF…PSVI), 99 to 119 (VYII…ITTC), 135 to 155 (INGI…AILI), 173 to 193 (HVAI…LSSL), 205 to 225 (LASM…NIAI), 242 to 262 (VLQM…MLWM), 280 to 300 (ICVL…PYFF), 323 to 343 (IGCF…GLNI), 371 to 391 (IALP…VGFI), and 415 to 435 (KSFG…IVIV).

This sequence belongs to the monovalent cation:proton antiporter 2 (CPA2) transporter (TC 2.A.37) family. CHX (TC 2.A.37.4) subfamily. In terms of tissue distribution, specifically expressed in pollen.

It localises to the membrane. In terms of biological role, may operate as a cation/H(+) antiporter. The sequence is that of Cation/H(+) antiporter 27 (CHX27) from Arabidopsis thaliana (Mouse-ear cress).